Reading from the N-terminus, the 172-residue chain is Macro domain-containing protein lp_3408 (172 aa).

In terms of domain architecture, Macro spans 1 to 171; that stretch reads MVEIKVIHGD…VFSTALAALT (171 aa).

This sequence belongs to the MacroD-type family.

The sequence is that of Macro domain-containing protein lp_3408 from Lactiplantibacillus plantarum (strain ATCC BAA-793 / NCIMB 8826 / WCFS1) (Lactobacillus plantarum).